Consider the following 515-residue polypeptide: 1-pyrroline-5-carboxylate dehydrogenase (515 aa).

Catalysis depends on residues E286 and C320.

The protein belongs to the aldehyde dehydrogenase family. RocA subfamily.

It catalyses the reaction L-glutamate 5-semialdehyde + NAD(+) + H2O = L-glutamate + NADH + 2 H(+). The protein operates within amino-acid degradation; L-proline degradation into L-glutamate; L-glutamate from L-proline: step 2/2. This is 1-pyrroline-5-carboxylate dehydrogenase from Geobacillus kaustophilus (strain HTA426).